The following is a 33-amino-acid chain: Dermonecrotic toxin LbSicTox-alphaIB1b (33 aa).

His-11 is an active-site residue. Glu-31 and Asp-33 together coordinate Mg(2+).

The protein belongs to the arthropod phospholipase D family. Class II subfamily. Mg(2+) is required as a cofactor. In terms of processing, contains 2 disulfide bonds. As to expression, expressed by the venom gland.

Its subcellular location is the secreted. The enzyme catalyses an N-(acyl)-sphingosylphosphocholine = an N-(acyl)-sphingosyl-1,3-cyclic phosphate + choline. It catalyses the reaction an N-(acyl)-sphingosylphosphoethanolamine = an N-(acyl)-sphingosyl-1,3-cyclic phosphate + ethanolamine. The catalysed reaction is a 1-acyl-sn-glycero-3-phosphocholine = a 1-acyl-sn-glycero-2,3-cyclic phosphate + choline. It carries out the reaction a 1-acyl-sn-glycero-3-phosphoethanolamine = a 1-acyl-sn-glycero-2,3-cyclic phosphate + ethanolamine. Dermonecrotic toxins cleave the phosphodiester linkage between the phosphate and headgroup of certain phospholipids (sphingolipid and lysolipid substrates), forming an alcohol (often choline) and a cyclic phosphate. This toxin acts on sphingomyelin (SM) with high activity (9.5 U/mg). It may also act on ceramide phosphoethanolamine (CPE), lysophosphatidylcholine (LPC) and lysophosphatidylethanolamine (LPE), but not on lysophosphatidylserine (LPS), and lysophosphatidylglycerol (LPG). It acts by transphosphatidylation, releasing exclusively cyclic phosphate products as second products. Induces dermonecrosis, hemolysis, increased vascular permeability, edema, inflammatory response, and platelet aggregation. The chain is Dermonecrotic toxin LbSicTox-alphaIB1b from Loxosceles boneti (North American fiddleback spider).